We begin with the raw amino-acid sequence, 312 residues long: Ribosomal protein L11 methyltransferase (312 aa).

Positions 163, 184, 206, and 248 each coordinate S-adenosyl-L-methionine.

Belongs to the methyltransferase superfamily. PrmA family.

It is found in the cytoplasm. The enzyme catalyses L-lysyl-[protein] + 3 S-adenosyl-L-methionine = N(6),N(6),N(6)-trimethyl-L-lysyl-[protein] + 3 S-adenosyl-L-homocysteine + 3 H(+). Methylates ribosomal protein L11. The chain is Ribosomal protein L11 methyltransferase from Clostridium botulinum (strain 657 / Type Ba4).